Here is a 242-residue protein sequence, read N- to C-terminus: Carboxy-S-adenosyl-L-methionine synthase (242 aa).

Residues tyrosine 38, 63–65, 88–89, 116–117, and arginine 199 contribute to the S-adenosyl-L-methionine site; these read GCS, DN, and DL.

Belongs to the class I-like SAM-binding methyltransferase superfamily. Cx-SAM synthase family. As to quaternary structure, homodimer.

The enzyme catalyses prephenate + S-adenosyl-L-methionine = carboxy-S-adenosyl-L-methionine + 3-phenylpyruvate + H2O. Its function is as follows. Catalyzes the conversion of S-adenosyl-L-methionine (SAM) to carboxy-S-adenosyl-L-methionine (Cx-SAM). In Methylococcus capsulatus (strain ATCC 33009 / NCIMB 11132 / Bath), this protein is Carboxy-S-adenosyl-L-methionine synthase.